Consider the following 448-residue polypeptide: MNNHTLNIIILAAGKGTRMQFDHPKLLHLLGGKPILEHVINLAQSLCPKTITVIYNKQYKKFKIKNKNNSITWIKQKKILGTGNAISQIINNYKDHENILILYGDVPLISKNSIQKMLLKKKNSTITLLTAKLNNPEEYGRIIRKNKKIVKIIEYKDATDEQLNIKEVNSGILIVSSTNLKKWIFQIHAKNNQNEYYITDIISLANKDNHKINSVRPEKNDEIQGINNLLQLVRAEKIYQKQQAKLLLLSGIMIYNPSNFSLRGTLKHGKNIKIDHGVILEGSVKIGNSVIIEPGCIIKNSTIGNNCTIKAYSIIEKTIISNKCIVGPFTHLQHGTVLKNNTHVGNFVEIKKTTLGSYSKAKHLSYLGNSQIGQKVNIGAGTVTCNYNGKKKLDTIIGDNVFIGSSTQLIAPINIKKGTIIAAGTTVMKNIHEPSLVYNEKKQIHKKL.

The interval 1–229 (MNNHTLNIII…NDEIQGINNL (229 aa)) is pyrophosphorylase. UDP-N-acetyl-alpha-D-glucosamine contacts are provided by residues 11 to 14 (LAAG), lysine 25, glutamine 76, 81 to 82 (GT), 103 to 105 (YGD), glycine 140, glutamate 154, asparagine 169, and asparagine 227. Aspartate 105 lines the Mg(2+) pocket. Mg(2+) is bound at residue asparagine 227. The tract at residues 230–250 (LQLVRAEKIYQKQQAKLLLLS) is linker. An N-acetyltransferase region spans residues 251–448 (GIMIYNPSNF…NEKKQIHKKL (198 aa)). Residue lysine 351 coordinates UDP-N-acetyl-alpha-D-glucosamine. The Proton acceptor role is filled by histidine 363. 2 residues coordinate UDP-N-acetyl-alpha-D-glucosamine: tyrosine 366 and asparagine 377. Residues alanine 380, 386–387 (NY), serine 405, and alanine 423 contribute to the acetyl-CoA site.

In the N-terminal section; belongs to the N-acetylglucosamine-1-phosphate uridyltransferase family. This sequence in the C-terminal section; belongs to the transferase hexapeptide repeat family. In terms of assembly, homotrimer. It depends on Mg(2+) as a cofactor.

The protein resides in the cytoplasm. It catalyses the reaction alpha-D-glucosamine 1-phosphate + acetyl-CoA = N-acetyl-alpha-D-glucosamine 1-phosphate + CoA + H(+). The catalysed reaction is N-acetyl-alpha-D-glucosamine 1-phosphate + UTP + H(+) = UDP-N-acetyl-alpha-D-glucosamine + diphosphate. Its pathway is nucleotide-sugar biosynthesis; UDP-N-acetyl-alpha-D-glucosamine biosynthesis; N-acetyl-alpha-D-glucosamine 1-phosphate from alpha-D-glucosamine 6-phosphate (route II): step 2/2. It functions in the pathway nucleotide-sugar biosynthesis; UDP-N-acetyl-alpha-D-glucosamine biosynthesis; UDP-N-acetyl-alpha-D-glucosamine from N-acetyl-alpha-D-glucosamine 1-phosphate: step 1/1. The protein operates within bacterial outer membrane biogenesis; LPS lipid A biosynthesis. In terms of biological role, catalyzes the last two sequential reactions in the de novo biosynthetic pathway for UDP-N-acetylglucosamine (UDP-GlcNAc). The C-terminal domain catalyzes the transfer of acetyl group from acetyl coenzyme A to glucosamine-1-phosphate (GlcN-1-P) to produce N-acetylglucosamine-1-phosphate (GlcNAc-1-P), which is converted into UDP-GlcNAc by the transfer of uridine 5-monophosphate (from uridine 5-triphosphate), a reaction catalyzed by the N-terminal domain. The chain is Bifunctional protein GlmU from Buchnera aphidicola subsp. Baizongia pistaciae (strain Bp).